The sequence spans 509 residues: 2,3-bisphosphoglycerate-independent phosphoglycerate mutase (509 aa).

Residues Asp12 and Ser62 each coordinate Mn(2+). Ser62 (phosphoserine intermediate) is an active-site residue. Substrate is bound by residues His123, 153–154 (RD), Arg185, Arg191, 260–263 (RPDR), and Lys333. Residues Asp400, His404, Asp441, His442, and His460 each coordinate Mn(2+).

This sequence belongs to the BPG-independent phosphoglycerate mutase family. Monomer. The cofactor is Mn(2+).

It carries out the reaction (2R)-2-phosphoglycerate = (2R)-3-phosphoglycerate. Its pathway is carbohydrate degradation; glycolysis; pyruvate from D-glyceraldehyde 3-phosphate: step 3/5. Functionally, catalyzes the interconversion of 2-phosphoglycerate and 3-phosphoglycerate. This is 2,3-bisphosphoglycerate-independent phosphoglycerate mutase from Clostridium botulinum (strain ATCC 19397 / Type A).